A 162-amino-acid polypeptide reads, in one-letter code: ATP synthase subunit b (162 aa).

Residues 8 to 28 (LTGIIQLLNFLILLFVLYKFL) traverse the membrane as a helical segment.

The protein belongs to the ATPase B chain family. As to quaternary structure, F-type ATPases have 2 components, F(1) - the catalytic core - and F(0) - the membrane proton channel. F(1) has five subunits: alpha(3), beta(3), gamma(1), delta(1), epsilon(1). F(0) has three main subunits: a(1), b(2) and c(10-14). The alpha and beta chains form an alternating ring which encloses part of the gamma chain. F(1) is attached to F(0) by a central stalk formed by the gamma and epsilon chains, while a peripheral stalk is formed by the delta and b chains.

Its subcellular location is the cell inner membrane. F(1)F(0) ATP synthase produces ATP from ADP in the presence of a proton or sodium gradient. F-type ATPases consist of two structural domains, F(1) containing the extramembraneous catalytic core and F(0) containing the membrane proton channel, linked together by a central stalk and a peripheral stalk. During catalysis, ATP synthesis in the catalytic domain of F(1) is coupled via a rotary mechanism of the central stalk subunits to proton translocation. Its function is as follows. Component of the F(0) channel, it forms part of the peripheral stalk, linking F(1) to F(0). This chain is ATP synthase subunit b, found in Pseudothermotoga lettingae (strain ATCC BAA-301 / DSM 14385 / NBRC 107922 / TMO) (Thermotoga lettingae).